A 238-amino-acid polypeptide reads, in one-letter code: Orotidine 5'-phosphate decarboxylase (238 aa).

Substrate-binding positions include Asp11, Lys32, 59–68, Thr123, Arg185, Gln194, Gly214, and Arg215; that span reads DLKFHDIPNT. Residue Lys61 is the Proton donor of the active site.

This sequence belongs to the OMP decarboxylase family. Type 1 subfamily. Homodimer.

It catalyses the reaction orotidine 5'-phosphate + H(+) = UMP + CO2. Its pathway is pyrimidine metabolism; UMP biosynthesis via de novo pathway; UMP from orotate: step 2/2. Catalyzes the decarboxylation of orotidine 5'-monophosphate (OMP) to uridine 5'-monophosphate (UMP). This chain is Orotidine 5'-phosphate decarboxylase, found in Nostoc sp. (strain PCC 7120 / SAG 25.82 / UTEX 2576).